The chain runs to 1036 residues: Histidine kinase 3 (1036 aa).

Residues M1–G8 lie on the Extracellular side of the membrane. A helical membrane pass occupies residues F9–V29. The Cytoplasmic portion of the chain corresponds to D30–K94. The chain crosses the membrane as a helical span at residues L95–S115. Over S116–P399 the chain is Extracellular. The CHASE domain occupies I163–R389. A helical membrane pass occupies residues V400–I420. Residues H421–S1036 lie on the Cytoplasmic side of the membrane. Residues T457–N723 enclose the Histidine kinase domain. Residue H460 is modified to Phosphohistidine; by autocatalysis. Response regulatory domains are found at residues K746–L865 and K891–F1028. D941 is modified (4-aspartylphosphate).

As to quaternary structure, interacts with AHK2, AHK4, AHP1, AHP2, AHP3, AHP5 and At5g43560. Autophosphorylated predominantly on His residues. Activation probably requires a transfer of a phosphate group between a His in the transmitter domain and an Asp of the receiver domain. As to expression, mostly expressed in leaves and flowers, and, to a lower extent, in roots, stems, and siliques, especially in the vascular tissues. Present in seedlings.

Its subcellular location is the cell membrane. The protein resides in the endoplasmic reticulum membrane. The enzyme catalyses ATP + protein L-histidine = ADP + protein N-phospho-L-histidine.. With respect to regulation, activated by cytokinins to initiate phosphorelay signaling. This cytokinin-mediated activation is repressed by the trans-zeatin antagonists 6-(2-hydroxy-3-methylbenzylamino)purine (PI-55) and 6-(2,5-Dihydroxybenzylamino)purine (LGR-991). Functionally, cytokinins (CK) receptor related to bacterial two-component regulators. Functions as a histidine kinase and transmits the stress signal to a downstream MAPK cascade. This protein undergoes an ATP-dependent autophosphorylation at a conserved histidine residue in the kinase core, and a phosphoryl group is then transferred to a conserved aspartate residue in the receiver domain. In the presence of cytokinin, feeds phosphate to phosphorelay-integrating histidine phosphotransfer protein (HPt) and activates subsequent cascade. Involved in meristems establishment in seedlings. Redundant negative regulator of drought and salt stress responses and abscisic acid (ABA) signaling. Together with AHK2, plays a negative regulatory role in cold stress signaling via inhibition of ABA response, occurring independently of the cold acclimation pathway. Redundant positive regulator of cytokinin signaling that regulates many developmental processes including seed germination, cell division, seed size, chlorophyll retention during leaf senescence, root repression and shoot promotion. Can interact with isoprenoid-type cytokinins trans-zeatin (tZ and tZR), cis-zeatin (cZ), dihydrozeatin (DZ), buta-2,3-dienyladenine (HA-8), penta-2,3-dienyladenine (HA-1), 4-methyl-penta-2,3-dienyladenine (HA-10), 4-hydroxy-2-butynyladenine (RM1), 2-propynyladenine (RM3), 2-butynyladenine (RM6), and cytokinin ribosides and ribotides. Together with AHK4, involved in the cytokinin-dependent responses to Pi starvation and sucrose stresses. Promotes cytokinin-mediated leaf longevity through a specific phosphorylation of the response regulator ARR2. Involved in alkamides (e.g. N-isobutyl decanamide) and N-acylethanolamides (NAE) signaling that control meristematic activity and differentiation processes during plant development. Contributes to vascular bundle formation and secondary growth in a cytokinin-dependent manner, probably by promoting the maintenance of mitotic activity and/or identity of procambial cells. Plays a role in the cytokinin-mediated repression of the iron uptake pathway. Required by the cytokinin-dependent flower development regulation pathway. This Arabidopsis thaliana (Mouse-ear cress) protein is Histidine kinase 3 (AHK3).